Reading from the N-terminus, the 222-residue chain is uncharacterized protein (222 aa).

The HTH gntR-type domain maps to 8 to 77; it reads AKKNQIIYRY…NTPGYFVCKD (70 aa).

This is an uncharacterized protein from Mycoplasma genitalium (strain ATCC 33530 / DSM 19775 / NCTC 10195 / G37) (Mycoplasmoides genitalium).